We begin with the raw amino-acid sequence, 89 residues long: Small ribosomal subunit protein uS17 (89 aa).

It belongs to the universal ribosomal protein uS17 family. Part of the 30S ribosomal subunit.

Its function is as follows. One of the primary rRNA binding proteins, it binds specifically to the 5'-end of 16S ribosomal RNA. The chain is Small ribosomal subunit protein uS17 from Chlorobium phaeobacteroides (strain BS1).